The chain runs to 631 residues: MDYDYEKLGLKVGLEIHQQLNTKRKLFCNCPTKIRDDEPHGEIERVLRPSQSEMGHVDKAALLESKKEKKFIYQYYNDTTCLVELDDEPPHDVAPEAVDTALEVSTLMNMKMADEIQVMRKMVIDGSNTSGFQRTMFVSQEGFIETDYGNIGVTSICLEEDACKKIEDGKDYTKYCVDRLGIPLLEITTEPDITSPKMGKEAARRIGTILRATGKVKRGLGTIRQDVNISIKGGARIEVKGVQNLDLIEKIIENEVTRQISLNEIKEELLKRNAEVIDEIKDITELLKDTESKVLKSALKNKGVIKAILLNGFSGMIGREVQPGRRLGTEFSDRGKVLGGVGGLFHTDELPKYGITEEEVIKLKEFMSCGENDAVILVADKKNKVERALNAVIERAKESMIGIPEETRKALDDGNTSYLRPLPGAARMYPETDVPTITITEEKLEMVRNNLPEMPEEKLVRFVNEYELNEDLAKQMVMSYHVDLFESLAKKYSKIKPTLIATTLEATLKEIKREGLETEVLTEEHLDEVFKGLSEDKMSKEAVPDVIKGFIENPAKNLDEVLEIKGMSSMSVEEVESIIEDIINQNISTVNEKGMGAMGLLMGRCMAQLRGNADGKLINTTLQKKLKEKVQ.

The protein belongs to the GatB/GatE family. GatE subfamily. Heterodimer of GatD and GatE.

The enzyme catalyses L-glutamyl-tRNA(Gln) + L-glutamine + ATP + H2O = L-glutaminyl-tRNA(Gln) + L-glutamate + ADP + phosphate + H(+). Allows the formation of correctly charged Gln-tRNA(Gln) through the transamidation of misacylated Glu-tRNA(Gln) in organisms which lack glutaminyl-tRNA synthetase. The reaction takes place in the presence of glutamine and ATP through an activated gamma-phospho-Glu-tRNA(Gln). The GatDE system is specific for glutamate and does not act on aspartate. This Methanococcus maripaludis (strain C7 / ATCC BAA-1331) protein is Glutamyl-tRNA(Gln) amidotransferase subunit E.